A 202-amino-acid polypeptide reads, in one-letter code: Dephospho-CoA kinase (202 aa).

The DPCK domain maps to 6-202 (KVSITGDLSS…EYFYALKGAL (197 aa)). ATP is bound at residue 14-19 (SSGKTE).

This sequence belongs to the CoaE family.

It localises to the cytoplasm. The catalysed reaction is 3'-dephospho-CoA + ATP = ADP + CoA + H(+). It functions in the pathway cofactor biosynthesis; coenzyme A biosynthesis; CoA from (R)-pantothenate: step 5/5. Its function is as follows. Catalyzes the phosphorylation of the 3'-hydroxyl group of dephosphocoenzyme A to form coenzyme A. This Chlamydia caviae (strain ATCC VR-813 / DSM 19441 / 03DC25 / GPIC) (Chlamydophila caviae) protein is Dephospho-CoA kinase.